A 340-amino-acid polypeptide reads, in one-letter code: Integral membrane protein SED5 (340 aa).

Topologically, residues 1–319 (MNIKDRTSEF…KYFDRIKSNR (319 aa)) are cytoplasmic. Residues 31–51 (RLQEKESENFANNTTGNGKSV) form a disordered region. Over residues 39-51 (NFANNTTGNGKSV) the composition is skewed to polar residues. Positions 146-173 (LNTQMKNISGSFKDVLEERQRLEMANKD) form a coiled coil. The disordered stretch occupies residues 180-231 (TDTGHAPADDQTQSNHAADLTTYNNSNPFMTSLLDESSEKNNNSSNQGELSF). A compositionally biased stretch (polar residues) spans 189-209 (DQTQSNHAADLTTYNNSNPFM). The t-SNARE coiled-coil homology domain occupies 249-311 (NVYLQERNRA…SGAQRELLKY (63 aa)). The helical; Anchor for type IV membrane protein transmembrane segment at 320–340 (WLAAKVFFIIFVFFVIWVLVN) threads the bilayer.

The protein belongs to the syntaxin family. In terms of assembly, interacts with SLY1, STF1, SFB3 and GOS1.

It is found in the membrane. It localises to the golgi apparatus membrane. Its function is as follows. Required for vesicular transport between the endoplasmic reticulum and the Golgi complex. Acts as a target organelle soluble NSF attachment protein receptor (t-SNARE). In Saccharomyces cerevisiae (strain ATCC 204508 / S288c) (Baker's yeast), this protein is Integral membrane protein SED5 (SED5).